The following is a 79-amino-acid chain: uncharacterized protein (79 aa).

Positions 1–18 are cleaved as a signal peptide; the sequence is MQIKNIVAVLATVTAINA. The segment at 24–44 is disordered; the sequence is PNATTPNATQPNATQPNTTLP. Residues N25, N30, N35, and N40 are each glycosylated (N-linked (GlcNAc...) asparagine). G55 carries the GPI-anchor amidated glycine lipid modification. Positions 56–79 are cleaved as a propeptide — removed in mature form; sequence EAVVNTMAAGAFGAAIAAGVAFLF.

It is found in the cell membrane. This is an uncharacterized protein from Saccharomyces cerevisiae (strain ATCC 204508 / S288c) (Baker's yeast).